Consider the following 591-residue polypeptide: L-lactate dehydrogenase (cytochrome) (591 aa).

Residues 1-80 constitute a mitochondrion transit peptide; sequence MLKYKPLLKI…LNWHNGQIDN (80 aa). The region spanning 88–165 is the Cytochrome b5 heme-binding domain; that stretch reads KQKISPAEVA…APEKKLGPLQ (78 aa). Residues H123, H146, Y177, Q219, and Y223 each coordinate heme b. One can recognise an FMN hydroxy acid dehydrogenase domain in the interval 197 to 563; that stretch reads PPLDNIINLY…KPDLLDLSTL (367 aa). Pyruvate is bound at residue Y223. FMN is bound by residues 275 to 278, S308, and Q332; that span reads SATA. Position 334 (Y334) interacts with pyruvate. Residue T360 participates in FMN binding. Position 376 (K376) interacts with heme b. An FMN-binding site is contributed by K429. Pyruvate contacts are provided by H453 and R456. H453 (proton acceptor) is an active-site residue. Residues 489–493 and 512–513 each bind FMN; these read DGGVR and GR.

The protein in the N-terminal section; belongs to the cytochrome b5 family. It in the C-terminal section; belongs to the FMN-dependent alpha-hydroxy acid dehydrogenase family. Homotetramer. FMN is required as a cofactor. The cofactor is heme b.

Its subcellular location is the mitochondrion intermembrane space. The catalysed reaction is (S)-lactate + 2 Fe(III)-[cytochrome c] = 2 Fe(II)-[cytochrome c] + pyruvate + 2 H(+). Its function is as follows. Catalyzes the oxidation of (S)-lactate (L-lactate) to pyruvate with subsequent transfer of electrons to cytochrome c. Is involved in the utilization of (S)-lactate as a sole source of carbon for growth. Can also use ferricyanide as an electron acceptor in vitro. The polypeptide is L-lactate dehydrogenase (cytochrome) (CYB2) (Saccharomyces cerevisiae (strain ATCC 204508 / S288c) (Baker's yeast)).